A 136-amino-acid polypeptide reads, in one-letter code: Large ribosomal subunit protein uL16 (136 aa).

The protein belongs to the universal ribosomal protein uL16 family. As to quaternary structure, part of the 50S ribosomal subunit.

In terms of biological role, binds 23S rRNA and is also seen to make contacts with the A and possibly P site tRNAs. The chain is Large ribosomal subunit protein uL16 from Proteus mirabilis (strain HI4320).